Here is a 626-residue protein sequence, read N- to C-terminus: Hemocyanin AA6 chain (626 aa).

Cu cation contacts are provided by histidine 170, histidine 174, histidine 201, histidine 321, histidine 325, and histidine 361. A Phosphoserine modification is found at serine 374.

This sequence belongs to the tyrosinase family. Hemocyanin subfamily. Scorpion hemocyanin is a 24-chain polymer with 8 different chains identified, assembled in hexameric substructures. In terms of processing, three disulfide bonds are present. As to expression, hemolymph.

The protein localises to the secreted. The protein resides in the extracellular space. In terms of biological role, hemocyanins are copper-containing oxygen carriers occurring freely dissolved in the hemolymph of many mollusks and arthropods. The protein is Hemocyanin AA6 chain of Androctonus australis (Sahara scorpion).